Consider the following 61-residue polypeptide: MHCLPVFVILLLLTASGLSVDARPKTEDDVPLSSFRDNTKSTLQRLLKRVNCCPIDESCCS.

The first 19 residues, 1-19 (MHCLPVFVILLLLTASGLS), serve as a signal peptide directing secretion. The propeptide occupies 20 to 47 (VDARPKTEDDVPLSSFRDNTKSTLQRLL). Residue E57 is modified to 4-carboxyglutamate.

Post-translationally, contains 2 disulfide bonds that can be either 'C1-C3, C2-C4' or 'C1-C4, C2-C3', since these disulfide connectivities have been observed for conotoxins with cysteine framework V (for examples, see AC P0DQQ7 and AC P81755). In terms of processing, contains 2 disulfide bonds. As to expression, expressed by the venom duct.

The protein resides in the secreted. The protein is Conotoxin TeAr154 of Conus textile (Cloth-of-gold cone).